Consider the following 572-residue polypeptide: Isocitrate lyase (572 aa).

104 to 106 lines the substrate pocket; it reads SGW. Position 175 (Asp-175) interacts with Mg(2+). The active-site Proton acceptor is the Cys-213. Substrate-binding positions include 214 to 215, Arg-250, 437 to 441, and Thr-472; these read GH and NLSPS. A disordered region spans residues 550–572; that stretch reads QFKGSWTGPGSESSSHVLAKSRM. Residues 570–572 carry the Microbody targeting signal motif; it reads SRM.

Belongs to the isocitrate lyase/PEP mutase superfamily. Isocitrate lyase family. Mg(2+) is required as a cofactor. As to expression, expressed in leaves.

The protein localises to the glyoxysome. The catalysed reaction is D-threo-isocitrate = glyoxylate + succinate. It participates in carbohydrate metabolism; glyoxylate cycle; (S)-malate from isocitrate: step 1/2. Involved in storage lipid mobilization during the growth of higher plant seedling. The polypeptide is Isocitrate lyase (Oryza sativa subsp. japonica (Rice)).